A 145-amino-acid chain; its full sequence is Dihydrolipoyllysine-residue succinyltransferase component of 2-oxoglutarate dehydrogenase complex, mitochondrial (145 aa).

Residues 4 to 31 (ITVQTPAFAESVTEGDVRVEGGTPLFTL) enclose the Lipoyl-binding domain. Serine 14 carries the phosphoserine modification. Residues lysine 36 and lysine 66 each carry the N6-acetyllysine modification. Residues histidine 119 and aspartate 123 contribute to the active site.

It belongs to the 2-oxoacid dehydrogenase family. In terms of assembly, the 2-oxoglutarate dehydrogenase complex is composed of OGDH (2-oxoglutarate dehydrogenase; E1), DLST (dihydrolipoamide succinyltransferase; E2), DLD (dihydrolipoamide dehydrogenase; E3) and the assembly factor KGD4. It contains multiple copies of the three enzymatic components (E1, E2 and E3). In the nucleus, the 2-oxoglutarate dehydrogenase complex associates with KAT2A. Interacts with ABHD11; this interaction maintains the functional lipoylation of the 2-oxoglutarate dehydrogenase complex. (R)-lipoate is required as a cofactor.

The protein resides in the mitochondrion matrix. Its subcellular location is the nucleus. The catalysed reaction is N(6)-[(R)-dihydrolipoyl]-L-lysyl-[protein] + succinyl-CoA = N(6)-[(R)-S(8)-succinyldihydrolipoyl]-L-lysyl-[protein] + CoA. It participates in amino-acid degradation; L-lysine degradation via saccharopine pathway; glutaryl-CoA from L-lysine: step 6/6. Its pathway is carbohydrate metabolism; tricarboxylic acid cycle. Its function is as follows. Dihydrolipoamide succinyltransferase (E2) component of the 2-oxoglutarate dehydrogenase complex. The 2-oxoglutarate dehydrogenase complex catalyzes the overall conversion of 2-oxoglutarate to succinyl-CoA and CO(2). The 2-oxoglutarate dehydrogenase complex is mainly active in the mitochondrion. A fraction of the 2-oxoglutarate dehydrogenase complex also localizes in the nucleus and is required for lysine succinylation of histones: associates with KAT2A on chromatin and provides succinyl-CoA to histone succinyltransferase KAT2A. This is Dihydrolipoyllysine-residue succinyltransferase component of 2-oxoglutarate dehydrogenase complex, mitochondrial from Mesocricetus auratus (Golden hamster).